A 616-amino-acid chain; its full sequence is Dihydroxy-acid dehydratase (616 aa).

D81 is a Mg(2+) binding site. C122 serves as a coordination point for [2Fe-2S] cluster. D123 and K124 together coordinate Mg(2+). K124 is subject to N6-carboxylysine. [2Fe-2S] cluster is bound at residue C195. Position 491 (E491) interacts with Mg(2+). S517 serves as the catalytic Proton acceptor.

Belongs to the IlvD/Edd family. As to quaternary structure, homodimer. [2Fe-2S] cluster serves as cofactor. Mg(2+) is required as a cofactor.

It carries out the reaction (2R)-2,3-dihydroxy-3-methylbutanoate = 3-methyl-2-oxobutanoate + H2O. The enzyme catalyses (2R,3R)-2,3-dihydroxy-3-methylpentanoate = (S)-3-methyl-2-oxopentanoate + H2O. Its pathway is amino-acid biosynthesis; L-isoleucine biosynthesis; L-isoleucine from 2-oxobutanoate: step 3/4. The protein operates within amino-acid biosynthesis; L-valine biosynthesis; L-valine from pyruvate: step 3/4. Functions in the biosynthesis of branched-chain amino acids. Catalyzes the dehydration of (2R,3R)-2,3-dihydroxy-3-methylpentanoate (2,3-dihydroxy-3-methylvalerate) into 2-oxo-3-methylpentanoate (2-oxo-3-methylvalerate) and of (2R)-2,3-dihydroxy-3-methylbutanoate (2,3-dihydroxyisovalerate) into 2-oxo-3-methylbutanoate (2-oxoisovalerate), the penultimate precursor to L-isoleucine and L-valine, respectively. The polypeptide is Dihydroxy-acid dehydratase (Salmonella typhi).